We begin with the raw amino-acid sequence, 424 residues long: Serine--tRNA ligase (424 aa).

Residue 230–232 (TAE) coordinates L-serine. 261-263 (RSE) contributes to the ATP binding site. Position 284 (glutamate 284) interacts with L-serine. ATP is bound at residue 348–351 (EISS). Residue serine 384 coordinates L-serine.

It belongs to the class-II aminoacyl-tRNA synthetase family. Type-1 seryl-tRNA synthetase subfamily. As to quaternary structure, homodimer. The tRNA molecule binds across the dimer.

The protein localises to the cytoplasm. It catalyses the reaction tRNA(Ser) + L-serine + ATP = L-seryl-tRNA(Ser) + AMP + diphosphate + H(+). The catalysed reaction is tRNA(Sec) + L-serine + ATP = L-seryl-tRNA(Sec) + AMP + diphosphate + H(+). Its pathway is aminoacyl-tRNA biosynthesis; selenocysteinyl-tRNA(Sec) biosynthesis; L-seryl-tRNA(Sec) from L-serine and tRNA(Sec): step 1/1. Its function is as follows. Catalyzes the attachment of serine to tRNA(Ser). Is also able to aminoacylate tRNA(Sec) with serine, to form the misacylated tRNA L-seryl-tRNA(Sec), which will be further converted into selenocysteinyl-tRNA(Sec). This Streptococcus pneumoniae serotype 2 (strain D39 / NCTC 7466) protein is Serine--tRNA ligase.